The primary structure comprises 309 residues: Olfactory receptor 10J5 (309 aa).

Residues 1-27 lie on the Extracellular side of the membrane; it reads MQRNNFTEVIEFVFLGFSSFGKHQITL. The helical transmembrane segment at 28–48 threads the bilayer; sequence FVVFLTIYILTLAGNIIIVTI. Residues 49–57 are Cytoplasmic-facing; the sequence is THIDHHLHT. The chain crosses the membrane as a helical span at residues 58–78; it reads PMYFFLSMLASSETVYTLVIV. Over 79 to 84 the chain is Extracellular; it reads PRMLSS. The chain crosses the membrane as a helical span at residues 85 to 105; the sequence is LIFYNLPISLAGCATQMFFFV. A disulfide bridge links Cys-97 with Cys-178. Topologically, residues 106–131 are cytoplasmic; the sequence is TLATNNCFLLTAMGYDRYVAICNPLR. Residues 132 to 152 traverse the membrane as a helical segment; it reads YTIIMSKGMCALLVCGSLGTG. Residues 153-203 are Extracellular-facing; that stretch reads LVMAVLHVPAMFHLPFCGTVVEHFFCDIYPVMKLSCVDTTVNEIINYGVSS. A helical membrane pass occupies residues 204-224; the sequence is FVILVPIGLIFISYVLIVSSI. The Cytoplasmic portion of the chain corresponds to 225–235; sequence LKIVSTEGQKK. Residues 236 to 256 form a helical membrane-spanning segment; that stretch reads AFATCASHLTVVIVHYGCASI. Over 257–270 the chain is Extracellular; sequence AYLKPKSESSVEKD. A helical membrane pass occupies residues 271 to 291; that stretch reads LLLSVTYTIITPLLNPVVYSL. The Cytoplasmic segment spans residues 292–309; that stretch reads RNKEVKDALCRAVGRNTS.

Belongs to the G-protein coupled receptor 1 family. Expressed in the olfactory epithelium as well as in the testis. Expressed in round spermatids during stages VI-VIII of spermatogenesis.

Its subcellular location is the cell membrane. In terms of biological role, olfactory receptor. Activated by the synthetic floral odorant, lyral, and by alpha-cedrene, a sesquiterpene constituent of cedarwood oil. Its activation increases intracellular Ca(2+). Acts as a key regulator of myogenesis through its actions on cell migration and adhesion by activating the Ca(2+)-dependent AKT signal transduction pathway. Also acts as a regulator of angiogenesis. Moreover, plays a role in the regulation of lipid accumulation in hepatocytes via the cAMP-PKA pathway. Involved in sperm chemotaxis and motility. The protein is Olfactory receptor 10J5 of Mus musculus (Mouse).